A 280-amino-acid polypeptide reads, in one-letter code: MLERAQRTLKREVRYSGVGIHFGKSATLTLEPAKENTGIVFCRSDLLGERIPALLPHVYNTGRSTTLSAGDSVIATVEHLMAALRSSNIDNVIVRCSEEEIPIGDGSSHVFMQLIDDAGICTQNDKVPIARLSQPVYYQSQDTFLAAFPCDELKISYTLHYPQSPTIGTQYRSFVITEESFRKEIAPCRTFALYNELCFLMDRGLIRGGCLENAVVFKDDGVISLGQLRFSDEPVRHKILDLIGDLSLVGRPFVAHIVAVGSGHSSNIALGRKILEVLQP.

H79, H237, and D241 together coordinate Zn(2+). The Proton donor role is filled by H264.

This sequence belongs to the LpxC family. Zn(2+) is required as a cofactor.

It catalyses the reaction a UDP-3-O-[(3R)-3-hydroxyacyl]-N-acetyl-alpha-D-glucosamine + H2O = a UDP-3-O-[(3R)-3-hydroxyacyl]-alpha-D-glucosamine + acetate. It functions in the pathway glycolipid biosynthesis; lipid IV(A) biosynthesis; lipid IV(A) from (3R)-3-hydroxytetradecanoyl-[acyl-carrier-protein] and UDP-N-acetyl-alpha-D-glucosamine: step 2/6. Catalyzes the hydrolysis of UDP-3-O-myristoyl-N-acetylglucosamine to form UDP-3-O-myristoylglucosamine and acetate, the committed step in lipid A biosynthesis. The sequence is that of UDP-3-O-acyl-N-acetylglucosamine deacetylase from Chlamydia caviae (strain ATCC VR-813 / DSM 19441 / 03DC25 / GPIC) (Chlamydophila caviae).